The primary structure comprises 244 residues: Carboxy-S-adenosyl-L-methionine synthase (244 aa).

S-adenosyl-L-methionine is bound by residues tyrosine 40, 65-67 (GCS), 90-91 (DN), 119-120 (DL), asparagine 134, and arginine 201.

The protein belongs to the class I-like SAM-binding methyltransferase superfamily. Cx-SAM synthase family. Homodimer.

It catalyses the reaction prephenate + S-adenosyl-L-methionine = carboxy-S-adenosyl-L-methionine + 3-phenylpyruvate + H2O. Its function is as follows. Catalyzes the conversion of S-adenosyl-L-methionine (SAM) to carboxy-S-adenosyl-L-methionine (Cx-SAM). The protein is Carboxy-S-adenosyl-L-methionine synthase of Trichlorobacter lovleyi (strain ATCC BAA-1151 / DSM 17278 / SZ) (Geobacter lovleyi).